Reading from the N-terminus, the 1219-residue chain is Disease resistance-like protein DSC1 (1219 aa).

Positions 9–176 (AEFDVFLSFR…EIAVDTFKKL (168 aa)) constitute a TIR domain. The active site involves Glu83. The NB-ARC domain maps to 197-446 (LEKLLSWEDL…DIACFFRSEN (250 aa)). 216–222 (GMVGIGK) is a binding site for ATP. LRR repeat units follow at residues 468–493 (LVDKCLITLSDNRIEMHDMLQTMAKE), 538–563 (TDKIRGIFLDTSKLRAMRLSAKAFQG), 597–619 (PNELTYLHWHGYPLQSIPLDFDP), 620–642 (KNLVDLKLPHSQLEEIWDDEKDV), 665–689 (AHNLERLNLEGCTSLKKLPSTINCL), 690–713 (EKLIYLNLRDCTSLRSLPKGIKTQ), 733–757 (SENVEVLLLDGTVIKSLPESIQTFR), 759–780 (LALLNLKNCKKLKHLSSDLYKL), 804–827 (MESLEILLMDDTSITEMPKMMHLS), 854–877 (CSRLTDLYLSRCSLYKLPDNIGGL), and 878–899 (SSLQSLCLSGNNIENLPESFNQ).

The protein belongs to the disease resistance NB-LRR family. Interacts with CAMTA3 and DSC2.

The catalysed reaction is NAD(+) + H2O = ADP-D-ribose + nicotinamide + H(+). TIR-NB-LRR receptor-like protein involved in plant defense. Acts as a trigger of hypersensitive response (HR). Functions as a guard of CAMTA3, a negative regulator of immunity, during pathogen infection. In Arabidopsis thaliana (Mouse-ear cress), this protein is Disease resistance-like protein DSC1.